Consider the following 310-residue polypeptide: Ribosomal RNA small subunit methyltransferase H (310 aa).

S-adenosyl-L-methionine-binding positions include Ala33–His35, Asp53, Phe79, Asp100, and Gln107.

This sequence belongs to the methyltransferase superfamily. RsmH family.

It localises to the cytoplasm. It catalyses the reaction cytidine(1402) in 16S rRNA + S-adenosyl-L-methionine = N(4)-methylcytidine(1402) in 16S rRNA + S-adenosyl-L-homocysteine + H(+). In terms of biological role, specifically methylates the N4 position of cytidine in position 1402 (C1402) of 16S rRNA. In Clostridium tetani (strain Massachusetts / E88), this protein is Ribosomal RNA small subunit methyltransferase H.